The chain runs to 132 residues: Histone H2A (132 aa).

The segment covering Met-1–Ser-13 has biased composition (basic residues). The tract at residues Met-1 to Lys-21 is disordered.

It belongs to the histone H2A family. As to quaternary structure, the nucleosome is a histone octamer containing two molecules each of H2A, H2B, H3 and H4 assembled in one H3-H4 heterotetramer and two H2A-H2B heterodimers. The octamer wraps approximately 147 bp of DNA.

Its subcellular location is the nucleus. It localises to the chromosome. In terms of biological role, core component of nucleosome. Nucleosomes wrap and compact DNA into chromatin, limiting DNA accessibility to the cellular machineries which require DNA as a template. Histones thereby play a central role in transcription regulation, DNA repair, DNA replication and chromosomal stability. DNA accessibility is regulated via a complex set of post-translational modifications of histones, also called histone code, and nucleosome remodeling. The polypeptide is Histone H2A (Plasmodium falciparum).